Reading from the N-terminus, the 190-residue chain is Protein FAM210B, mitochondrial (190 aa).

A mitochondrion-targeting transit peptide spans 1-58 (MAGLLTLLGPAGRVSTRLRPLAPWLLGTATSCAPPLWALALSHPVPDARLLRTARGDC). Over residues 56-66 (GDCLSRQEPNR) the composition is skewed to basic and acidic residues. The disordered stretch occupies residues 56-81 (GDCLSRQEPNRTPEPGGSVTGTEKKL). The DUF1279 domain maps to 78-189 (EKKLSRTQQL…VGLFKPPATK (112 aa)). The next 2 helical transmembrane spans lie at 97-117 (VGVSMHIGISLVSLGIFYTVV) and 148-168 (FVVAYAIHKLFAPVRISITLV).

This sequence belongs to the FAM210 family. In terms of tissue distribution, expressed in late erythroblast differentiation stages.

Its subcellular location is the mitochondrion. The protein localises to the mitochondrion outer membrane. Its function is as follows. Plays a role in erythroid differentiation. Involved in cell proliferation and tumor cell growth suppression. Involved in the metabolic reprogramming of cancer cells in a PDK4-dependent manner. The sequence is that of Protein FAM210B, mitochondrial from Mus musculus (Mouse).